Here is a 65-residue protein sequence, read N- to C-terminus: Alpha-insect toxin BotIT1 (65 aa).

An LCN-type CS-alpha/beta domain is found at 2 to 64; that stretch reads RDAYIAQNYN…VPIRIPGKCH (63 aa). Cystine bridges form between C12/C63, C16/C36, C22/C46, and C26/C48.

The protein belongs to the long (4 C-C) scorpion toxin superfamily. Sodium channel inhibitor family. Alpha subfamily. As to expression, expressed by the venom gland.

Its subcellular location is the secreted. Alpha toxins bind voltage-independently at site-3 of sodium channels (Nav) and inhibit the inactivation of the activated channels, thereby blocking neuronal transmission. This contractive toxin is highly toxic to insects and barely toxic to mammals. The chain is Alpha-insect toxin BotIT1 from Buthus occitanus tunetanus (Common European scorpion).